The chain runs to 278 residues: Small ribosomal subunit biogenesis GTPase RsgA (278 aa).

One can recognise a CP-type G domain in the interval 62–218 (KNELTRPRVA…ICDTPGFNVI (157 aa)). Residues 112–115 (TKTD) and 162–170 (GQSGVGKSS) contribute to the GTP site. Residues Cys-241, Cys-246, His-248, and Cys-254 each contribute to the Zn(2+) site.

The protein belongs to the TRAFAC class YlqF/YawG GTPase family. RsgA subfamily. In terms of assembly, monomer. Associates with 30S ribosomal subunit, binds 16S rRNA. The cofactor is Zn(2+).

It is found in the cytoplasm. Its function is as follows. One of several proteins that assist in the late maturation steps of the functional core of the 30S ribosomal subunit. Helps release RbfA from mature subunits. May play a role in the assembly of ribosomal proteins into the subunit. Circularly permuted GTPase that catalyzes slow GTP hydrolysis, GTPase activity is stimulated by the 30S ribosomal subunit. The sequence is that of Small ribosomal subunit biogenesis GTPase RsgA from Mycoplasma genitalium (strain ATCC 33530 / DSM 19775 / NCTC 10195 / G37) (Mycoplasmoides genitalium).